Consider the following 244-residue polypeptide: NAD-dependent protein deacetylase (244 aa).

The region spanning 1 to 244 (MDDKINKLKE…IGKVLGKVID (244 aa)) is the Deacetylase sirtuin-type domain. Residues alanine 24, threonine 28, phenylalanine 35, arginine 36, glutamine 105, isoleucine 107, aspartate 108, and histidine 123 each coordinate NAD(+). Phenylalanine 35 is a binding site for nicotinamide. 2 residues coordinate nicotinamide: isoleucine 107 and aspartate 108. Residue histidine 123 is the Proton acceptor of the active site. The Zn(2+) site is built by cysteine 131, cysteine 134, cysteine 152, and cysteine 155. Residues threonine 193, serine 194, asparagine 217, and isoleucine 235 each coordinate NAD(+).

The protein belongs to the sirtuin family. Class U subfamily. The cofactor is Zn(2+).

Its subcellular location is the cytoplasm. The enzyme catalyses N(6)-acetyl-L-lysyl-[protein] + NAD(+) + H2O = 2''-O-acetyl-ADP-D-ribose + nicotinamide + L-lysyl-[protein]. Its function is as follows. NAD-dependent protein deacetylase which modulates the activities of several enzymes which are inactive in their acetylated form. In Clostridium perfringens (strain 13 / Type A), this protein is NAD-dependent protein deacetylase.